Here is a 216-residue protein sequence, read N- to C-terminus: Uracil phosphoribosyltransferase (216 aa).

GTP contacts are provided by residues Arg32, Arg41, 75–78 (LGKI), and Lys77. Arg85 lines the 5-phospho-alpha-D-ribose 1-diphosphate pocket. Arg102 lines the GTP pocket. Arg110 contacts 5-phospho-alpha-D-ribose 1-diphosphate. Arg131 is a binding site for GTP. Residues Asp137 and 137–145 (DPMLATGGS) contribute to the 5-phospho-alpha-D-ribose 1-diphosphate site. Residue Tyr201 participates in D-ribose 5-phosphate binding. Uracil-binding positions include Leu202 and 207 to 209 (GDF). Asp208 serves as a coordination point for 5-phospho-alpha-D-ribose 1-diphosphate.

The protein belongs to the UPRTase family. Mg(2+) serves as cofactor.

The enzyme catalyses UMP + diphosphate = 5-phospho-alpha-D-ribose 1-diphosphate + uracil. It functions in the pathway pyrimidine metabolism; UMP biosynthesis via salvage pathway; UMP from uracil: step 1/1. Allosterically activated by GTP. Its function is as follows. Catalyzes the conversion of uracil and 5-phospho-alpha-D-ribose 1-diphosphate (PRPP) to UMP and diphosphate. The sequence is that of Uracil phosphoribosyltransferase (FUR1) from Lachancea kluyveri (Yeast).